The chain runs to 1333 residues: MSYANYRYMKARAKRWRPENLDGIQTSDEHLINLFAKILSKHVPEIGKFDPNKDVESYISKLDQHFTEYPSLFPNEHTKRQYTLNHLEELEQQFAERMFSENGSLTWQELLRQTGKVQGSNKGDRLTKTFEGFRNQLDKVQFIRKLMSKANVDDFHTRLFILWMLPYSLRKLKERNYWKSEISEIYDFLEDKRTASYGKTHKRFQPQNKNLGKESLSKKNNTTNSRNLRKTNVSRIEYSSNKFLNHTRKRYEMVLQAELPDFKCSIPCLIDTGAQANIITEETVRAHKLPTRPWSKSVIYGGVYPNKINRKTIKLNISLNGISIKTEFLVVKKFSHPAAISFTTLYDNNIEISSSKHTLSQMNKVSNIVKEPELPDIYKEFKDITAETNTEKLPKPIKGLEFEVELTQENYRLPIRNYPLPPGKMQAMNDEINQGLKSGIIRESKAINACPVMFVPKKEGTLRMVVDYKPLNKYVKPNIYPLPLIEQLLAKIQGSTIFTKLDLKSAYHLIRVRKGDEHKLAFRCPRGVFEYLVMPYGISTAPAHFQYFINTILGEAKESHVVCYMDDILIHSKSESEHVKHVKDVLQKLKNANLIINQAKCEFHQSQVKFIGYHISEKGFTPCQENIDKVLQWKQPKNRKELRQFLGSVNYLRKFIPKTSQLTHPLNNLLKKDVRWKWTPTQTQAIENIKQCLVSPPVLRHFDFSKKILLETDASDVAVGAVLSQKHDDDKYYPVGYYSAKMSKAQLNYSVSDKEMLAIIKSLKHWRHYLESTIEPFKILTDHRNLIGRITNESEPENKRLARWQLFLQDFNFEINYRPGSANHIADALSRIVDETEPIPKDSEDNSINFVNQISITDDFKNQVVTEYTNDTKLLNLLNNEDKRVEENIQLKDGLLINSKDQILLPNDTQLTRTIIKKYHEEGKLIHPGIELLTNIILRRFTWKGIRKQIQEYVQNCHTCQINKSRNHKPYGPLQPIPPSERPWESLSMDFITALPESSGYNALFVVVDRFSKMAILVPCTKSITAEQTARMFDQRVIAYFGNPKEIIADNDHIFTSQTWKDFAHKYNFVMKFSLPYRPQTDGQTERTNQTVEKLLRCVCSTHPNTWVDHISLVQQSYNNAIHSATQMTPFEIVHRYSPALSPLELPSFSDKTDENSQETIQVFQTVKEHLNTNNIKMKKYFDMKIQEIEEFQPGDLVMVKRTKTGFLHKSNKLAPSFAGPFYVLQKSGPNNYELDLPDSIKHMFSSTFHVSHLEKYRHNSELNYATIDESDIGTILHILEHKNREQVLYLNVKYISNLNPSTIMSGWTTLATALQADKAIVNDYIKNNNLNI.

Positions 199–231 (KTHKRFQPQNKNLGKESLSKKNNTTNSRNLRKT) are disordered. Positions 218–231 (KKNNTTNSRNLRKT) are enriched in polar residues. Residues 266 to 342 (IPCLIDTGAQ…KFSHPAAISF (77 aa)) form the Peptidase A2 domain. Asp271 serves as the catalytic For protease activity. One can recognise a Reverse transcriptase domain in the interval 436–615 (LKSGIIRESK…SQVKFIGYHI (180 aa)). Asp502, Asp566, Asp567, Asp990, and Asp1050 together coordinate Mg(2+). Residues 979–1138 (PSERPWESLS…TPFEIVHRYS (160 aa)) enclose the Integrase catalytic domain.

In terms of processing, processing of the polyproteins proceeds by an ordered pathway, called maturation. It involves the initial cleavage of a 27 kDa capsid protein (CA) from the N-terminus of the polyprotein, followed by the cleavage of a 56 kDa integrase (IN) from the C-terminus. This leaves a 72 kDa protease-reverse transcriptase fusion protein (PR-RT), which does not seem to be processed further.

This is Transposon Tf2-12 polyprotein (Tf2-12) from Schizosaccharomyces pombe (strain 972 / ATCC 24843) (Fission yeast).